The sequence spans 305 residues: UPF0612 protein C337.02c (305 aa).

2 coiled-coil regions span residues 27–63 (IERY…MKYE) and 120–207 (NDMN…DARS).

It belongs to the UPF0612 family.

The sequence is that of UPF0612 protein C337.02c from Schizosaccharomyces pombe (strain 972 / ATCC 24843) (Fission yeast).